A 409-amino-acid polypeptide reads, in one-letter code: uncharacterized protein (409 aa).

10 helical membrane passes run 18–38 (ALSAWRFVTVFGVVGLLADVV), 47–67 (GPLLASLGATGLVVGVVTGVG), 100–120 (VVTVPLLGIAGALWVACALVI), 159–179 (VGAMIGPLTVAGMLAITGNAY), 180–200 (APALGVLTLPGGAALALLLWL), 232–252 (FWLYCGFTAITMLGFGTFGLL), 260–280 (GVLAAAMVPVVYAAAMAADAL), 302–322 (ILSILVVLFAFTDNVTMVVIG), 355–375 (GVFAAGLGAATAGGGALIGWL), and 380–400 (IGTLVVVVIALELMALVMMFA).

The protein localises to the cell membrane. This is an uncharacterized protein from Mycobacterium tuberculosis (strain CDC 1551 / Oshkosh).